Consider the following 573-residue polypeptide: 2-succinyl-5-enolpyruvyl-6-hydroxy-3-cyclohexene-1-carboxylate synthase (573 aa).

The protein belongs to the TPP enzyme family. MenD subfamily. As to quaternary structure, homodimer. The cofactor is Mg(2+). Mn(2+) serves as cofactor. Requires thiamine diphosphate as cofactor.

It catalyses the reaction isochorismate + 2-oxoglutarate + H(+) = 5-enolpyruvoyl-6-hydroxy-2-succinyl-cyclohex-3-ene-1-carboxylate + CO2. It participates in quinol/quinone metabolism; 1,4-dihydroxy-2-naphthoate biosynthesis; 1,4-dihydroxy-2-naphthoate from chorismate: step 2/7. The protein operates within quinol/quinone metabolism; menaquinone biosynthesis. In terms of biological role, catalyzes the thiamine diphosphate-dependent decarboxylation of 2-oxoglutarate and the subsequent addition of the resulting succinic semialdehyde-thiamine pyrophosphate anion to isochorismate to yield 2-succinyl-5-enolpyruvyl-6-hydroxy-3-cyclohexene-1-carboxylate (SEPHCHC). This chain is 2-succinyl-5-enolpyruvyl-6-hydroxy-3-cyclohexene-1-carboxylate synthase, found in Shewanella baltica (strain OS155 / ATCC BAA-1091).